A 104-amino-acid polypeptide reads, in one-letter code: Fusaric acid biosynthesis protein 2 (104 aa).

The protein belongs to the YciI family.

It participates in mycotoxin biosynthesis. Functionally, part of the gene cluster that mediates the biosynthesis of fusaric acid, a mycotoxin with low to moderate toxicity to animals and humans, but with high phytotoxic properties. L-aspartate is suggested as fusaric acid amino acid precursor that is activated and further processed to O-acetyl-L-homoserine by cluster enzymes aspartate kinase FUB3 and homoserine O-acetyltransferase FUB5, as well as enzymes of the primary metabolism. The polyketide synthase (PKS) FUB1 generates the triketide trans-2-hexenal which is presumptively released by the hydrolase FUB4 and linked to the NRPS-bound amino acid precursor by NAD(P)-dependent dehydrogenase FUB6. FUB1, FUB4, and the non-canonical NRPS Fub8 may form an enzyme complex. Further processing of the NRPS-bound intermediate might be carried out by FUB6 and the sulfhydrylase FUB7, enabling a spontaneous electrocyclization to close the carbon backbone of fusaric acid. Dihydrofusaric acid is likely to be released via reduction by the thioester reductase (TR) domain of FUB8 whereupon the final oxidation to fusaric acid may (also) be performed by the FMN-dependent dehydrogenase FUB9. The sequence is that of Fusaric acid biosynthesis protein 2 from Gibberella moniliformis (strain M3125 / FGSC 7600) (Maize ear and stalk rot fungus).